We begin with the raw amino-acid sequence, 1014 residues long: Disease resistance protein RGA4 (1014 aa).

Residues Met1–Gly182 form a structured coiled coil (CC) domain region. Residues Arg105–Ala145 adopt a coiled-coil conformation. Residues Glu189–Val466 form the NB-ARC domain. LRR repeat units follow at residues Arg484 to Met506, Met507 to Leu530, Pro531 to Gly552, Leu580 to Leu602, Val603 to Leu624, Lys625 to Leu647, Met701 to Glu725, Pro762 to Leu784, Arg785 to Asn807, Leu808 to Arg833, and Leu854 to Cys877.

It belongs to the disease resistance NB-LRR family. In terms of tissue distribution, expressed in leaves.

Probable disease resistance protein. Resistance proteins guard the plant against pathogens that contain an appropriate avirulence protein via an indirect interaction with this avirulence protein. That triggers a defense system including the hypersensitive response, which restricts the pathogen growth. At the opposite of cultivars Aichi asahi and Sasanishiki, the cultivars Nipponbare, Mokoto and Hitomebore don't recognize the effector avirulence protein AVR-Pia from M.oryzae. This Oryza sativa subsp. japonica (Rice) protein is Disease resistance protein RGA4.